The primary structure comprises 103 residues: Co-chaperonin GroES (103 aa).

This sequence belongs to the GroES chaperonin family. As to quaternary structure, heptamer of 7 subunits arranged in a ring. Interacts with the chaperonin GroEL.

Its subcellular location is the plastid. It is found in the cyanelle. Its function is as follows. Together with the chaperonin GroEL, plays an essential role in assisting protein folding. The GroEL-GroES system forms a nano-cage that allows encapsulation of the non-native substrate proteins and provides a physical environment optimized to promote and accelerate protein folding. GroES binds to the apical surface of the GroEL ring, thereby capping the opening of the GroEL channel. The chain is Co-chaperonin GroES from Cyanophora paradoxa.